Consider the following 332-residue polypeptide: UDP-3-O-acylglucosamine N-acyltransferase (332 aa).

His231 serves as the catalytic Proton acceptor.

Belongs to the transferase hexapeptide repeat family. LpxD subfamily. Homotrimer.

It carries out the reaction a UDP-3-O-[(3R)-3-hydroxyacyl]-alpha-D-glucosamine + a (3R)-hydroxyacyl-[ACP] = a UDP-2-N,3-O-bis[(3R)-3-hydroxyacyl]-alpha-D-glucosamine + holo-[ACP] + H(+). The protein operates within bacterial outer membrane biogenesis; LPS lipid A biosynthesis. Functionally, catalyzes the N-acylation of UDP-3-O-acylglucosamine using 3-hydroxyacyl-ACP as the acyl donor. Is involved in the biosynthesis of lipid A, a phosphorylated glycolipid that anchors the lipopolysaccharide to the outer membrane of the cell. The polypeptide is UDP-3-O-acylglucosamine N-acyltransferase (Vesicomyosocius okutanii subsp. Calyptogena okutanii (strain HA)).